The sequence spans 443 residues: Crh-like protein 2 (443 aa).

A signal peptide spans 1 to 20; that stretch reads MVRIGSSLLLATLAATTVSA. One can recognise a GH16 domain in the interval 21 to 306; it reads ASDPPKCSQD…TVECYDPPSG (286 aa). Cysteines 56 and 67 form a disulfide. E164 functions as the Nucleophile in the catalytic mechanism. The active-site Proton donor is E168. Chitin is bound at residue E168. 2 N-linked (GlcNAc...) asparagine glycosylation sites follow: N194 and N237. Chitin contacts are provided by W257 and T268. 2 N-linked (GlcNAc...) asparagine glycosylation sites follow: N332 and N359. 2 stretches are compositionally biased toward low complexity: residues 350 to 367 and 378 to 410; these read ASSS…SANT and EPGN…SETS. Residues 350–420 are disordered; that stretch reads ASSSASGSAN…ASSNKNAAPS (71 aa). Over residues 411-420 the composition is skewed to polar residues; it reads ASSNKNAAPS. A lipid anchor (GPI-like-anchor amidated asparagine) is attached at N416. A propeptide spans 417 to 443 (removed in mature form); that stretch reads AAPSQNERVLNGSFFAVLVAVVALVTL. N427 carries an N-linked (GlcNAc...) asparagine glycan.

It belongs to the glycosyl hydrolase 16 family. CRH1 subfamily. The GPI-like anchor contains a phosphoceramide lipid group. The anchor position has not been determined.

It is found in the cell membrane. The protein localises to the secreted. Its subcellular location is the cell wall. It carries out the reaction Random endo-hydrolysis of N-acetyl-beta-D-glucosaminide (1-&gt;4)-beta-linkages in chitin and chitodextrins.. Its function is as follows. Dual chitinase/transglycosylase that plays a role in cell wall architecture. Chitinase and transglycosylase activities are coupled. Required for the polysaccharide cross-linking at the septa and the cell wall. More specifically, transfers chitin to 1,6-beta-glucan in the cell wall. This is Crh-like protein 2 from Aspergillus fumigatus (strain ATCC MYA-4609 / CBS 101355 / FGSC A1100 / Af293) (Neosartorya fumigata).